A 290-amino-acid chain; its full sequence is 3-hydroxyacyl-thioester dehydratase Y (290 aa).

The segment at 147 to 169 is disordered; sequence FGGARGERPAAPEFPDRHPDARI. Residues 151–169 are compositionally biased toward basic and acidic residues; it reads RGERPAAPEFPDRHPDARI. The 111-residue stretch at 161–271 folds into the MaoC-like domain; it reads PDRHPDARID…AVFRTEVAGS (111 aa).

Belongs to the enoyl-CoA hydratase/isomerase family.

The enzyme catalyses a (3R)-3-hydroxyacyl-CoA = a (2E)-enoyl-CoA + H2O. It catalyses the reaction (3R)-hydroxyhexanoyl-CoA = (2E)-hexenoyl-CoA + H2O. The catalysed reaction is (2E)-octenoyl-CoA + H2O = (3R)-hydroxyoctanoyl-CoA. It carries out the reaction (3R)-3-hydroxydecanoyl-CoA = (2E)-decenoyl-CoA + H2O. The enzyme catalyses (3R)-3-hydroxydodecanoyl-CoA = (2E)-dodecenoyl-CoA + H2O. It catalyses the reaction (3R)-hydroxyhexadecanoyl-CoA = (2E)-hexadecenoyl-CoA + H2O. Shows trans-enoyl-CoA hydratase/3-hydroxyacyl-CoA dehydratase activity. In vitro, can hydrate various enoyl-CoA such as (2E)-hexenoyl-CoA, (2E)-octenoyl-CoA, (2E)-decenoyl-CoA, (2E)-dodecenoyl-CoA and (2E)-hexadecenoyl-CoA. May contribute to the persistence of the tuberculosis infection by inducing COX-2 expression in macrophages through MAPK-NF-kappaB signaling pathway. The polypeptide is 3-hydroxyacyl-thioester dehydratase Y (Mycobacterium tuberculosis (strain ATCC 25618 / H37Rv)).